Reading from the N-terminus, the 204-residue chain is Recombination protein RecR (204 aa).

Residues 58–75 (CSVCQNITDVGVDPCALC) form a C4-type zinc finger. One can recognise a Toprim domain in the interval 83–181 (SVICVVESPV…HVTKIARGIP (99 aa)).

Belongs to the RecR family.

In terms of biological role, may play a role in DNA repair. It seems to be involved in an RecBC-independent recombinational process of DNA repair. It may act with RecF and RecO. In Pelodictyon phaeoclathratiforme (strain DSM 5477 / BU-1), this protein is Recombination protein RecR.